The following is a 429-amino-acid chain: Multifunctional CCA protein (429 aa).

Residues Gly-27 and Arg-30 each contribute to the ATP site. Gly-27 and Arg-30 together coordinate CTP. Mg(2+) is bound by residues Asp-40 and Asp-42. Positions 110, 162, and 165 each coordinate ATP. The CTP site is built by Arg-110, Arg-162, and Arg-165. The region spanning 251–352 (TGVHTMMVVD…VRLLERCDAL (102 aa)) is the HD domain.

Belongs to the tRNA nucleotidyltransferase/poly(A) polymerase family. Bacterial CCA-adding enzyme type 1 subfamily. As to quaternary structure, monomer. Can also form homodimers and oligomers. The cofactor is Mg(2+). Requires Ni(2+) as cofactor.

The catalysed reaction is a tRNA precursor + 2 CTP + ATP = a tRNA with a 3' CCA end + 3 diphosphate. It catalyses the reaction a tRNA with a 3' CCA end + 2 CTP + ATP = a tRNA with a 3' CCACCA end + 3 diphosphate. In terms of biological role, catalyzes the addition and repair of the essential 3'-terminal CCA sequence in tRNAs without using a nucleic acid template. Adds these three nucleotides in the order of C, C, and A to the tRNA nucleotide-73, using CTP and ATP as substrates and producing inorganic pyrophosphate. tRNA 3'-terminal CCA addition is required both for tRNA processing and repair. Also involved in tRNA surveillance by mediating tandem CCA addition to generate a CCACCA at the 3' terminus of unstable tRNAs. While stable tRNAs receive only 3'-terminal CCA, unstable tRNAs are marked with CCACCA and rapidly degraded. The chain is Multifunctional CCA protein from Ralstonia nicotianae (strain ATCC BAA-1114 / GMI1000) (Ralstonia solanacearum).